The chain runs to 302 residues: tRNA dimethylallyltransferase (302 aa).

12-19 provides a ligand contact to ATP; the sequence is GPTASGKS. Position 14–19 (14–19) interacts with substrate; sequence TASGKS. The segment at 37-40 is interaction with substrate tRNA; sequence DSMQ.

The protein belongs to the IPP transferase family. Monomer. The cofactor is Mg(2+).

It carries out the reaction adenosine(37) in tRNA + dimethylallyl diphosphate = N(6)-dimethylallyladenosine(37) in tRNA + diphosphate. Its function is as follows. Catalyzes the transfer of a dimethylallyl group onto the adenine at position 37 in tRNAs that read codons beginning with uridine, leading to the formation of N6-(dimethylallyl)adenosine (i(6)A). The polypeptide is tRNA dimethylallyltransferase (Corynebacterium diphtheriae (strain ATCC 700971 / NCTC 13129 / Biotype gravis)).